The following is a 51-amino-acid chain: uncharacterized protein (51 aa).

Residues 3–30 (EEKAVSLAKEIIELDIKRDEMLETFMQL) are a coiled coil.

This is an uncharacterized protein from Bacillus subtilis (strain 168).